A 356-amino-acid polypeptide reads, in one-letter code: Homoserine O-acetyltransferase (356 aa).

One can recognise an AB hydrolase-1 domain in the interval 50-335; sequence NVILVCHALT…DEPYGHDAFL (286 aa). Catalysis depends on serine 146, which acts as the Nucleophile. Substrate is bound at residue arginine 215. Active-site residues include aspartate 302 and histidine 331. Residue aspartate 332 coordinates substrate.

This sequence belongs to the AB hydrolase superfamily. MetX family. As to quaternary structure, homodimer.

The protein localises to the cytoplasm. It catalyses the reaction L-homoserine + acetyl-CoA = O-acetyl-L-homoserine + CoA. It functions in the pathway amino-acid biosynthesis; L-methionine biosynthesis via de novo pathway; O-acetyl-L-homoserine from L-homoserine: step 1/1. Functionally, transfers an acetyl group from acetyl-CoA to L-homoserine, forming acetyl-L-homoserine. The chain is Homoserine O-acetyltransferase from Chlorobaculum parvum (strain DSM 263 / NCIMB 8327) (Chlorobium vibrioforme subsp. thiosulfatophilum).